We begin with the raw amino-acid sequence, 242 residues long: MKKIIIGNWKMNKTVSETRDFIQKFDIFYQENVGKIKEDLDFAIAPSFISLSLISKSLTKKLEIAAQNLSQFDSGAFTGEISGKMLQDLGTKYVIIGHSERREIFKEKDEELKNKILQAQKYDLIPVFCVGESLLEFEAGLTKKVIISQINAIKSVLNFQKAIIAYEPIWAIGTGKTATAAIAEKVCGLIKENFGKNTMVIYGGSVNSKNINELVSQKSIDGALVGGASLDPEEFGKILVNS.

Substrate is bound at residue 8–10; the sequence is NWK. Catalysis depends on His-98, which acts as the Electrophile. The active-site Proton acceptor is the Glu-167. Substrate-binding positions include Gly-173, Ser-205, and 226–227; that span reads GG.

It belongs to the triosephosphate isomerase family. Homodimer.

The protein resides in the cytoplasm. The enzyme catalyses D-glyceraldehyde 3-phosphate = dihydroxyacetone phosphate. It functions in the pathway carbohydrate biosynthesis; gluconeogenesis. It participates in carbohydrate degradation; glycolysis; D-glyceraldehyde 3-phosphate from glycerone phosphate: step 1/1. Involved in the gluconeogenesis. Catalyzes stereospecifically the conversion of dihydroxyacetone phosphate (DHAP) to D-glyceraldehyde-3-phosphate (G3P). The polypeptide is Triosephosphate isomerase (Mesomycoplasma hyopneumoniae (strain 232) (Mycoplasma hyopneumoniae)).